The primary structure comprises 376 residues: MPARRGDAHIDFARSPRPTIGVEWEFALVDAQTRDLSNEATAVIAEIGENPRVHKELLRNTVEVVSGICRTVPEAMEDLRQTLGPARRIVRDRGMELFCAGAHPFAQWTTQKLTDAPRYAELIKRTQWWGRQMLIWGVHVHVGISSPNKVMPIMTSLLNYYPHLLALSASSPWWTGVDTGYASNRAMMFQQLPTAGLPFQFQTWAEFEGFVYDQKKTGIIDHVDEVRWDIRPSPHLGTLEMRICDGVSNLHELAALVALTHCLVVDLDRRLEADESLPTMPPWHHQENKWRAARYGLDAVIILDADSNERLVTEDLDDVLNRLEPVARKLQCADELAAVADIPRHGASYQRQRRVAEEHDGDLRAVVDALVAELEI.

It belongs to the glutamate--cysteine ligase type 2 family. YbdK subfamily.

It catalyses the reaction L-cysteine + L-glutamate + ATP = gamma-L-glutamyl-L-cysteine + ADP + phosphate + H(+). Its function is as follows. ATP-dependent carboxylate-amine ligase which exhibits weak glutamate--cysteine ligase activity. In Mycolicibacterium paratuberculosis (strain ATCC BAA-968 / K-10) (Mycobacterium paratuberculosis), this protein is Putative glutamate--cysteine ligase 2.